Consider the following 100-residue polypeptide: Cell division protein FtsB (100 aa).

Residues 1–3 (MKQ) are Cytoplasmic-facing. A helical membrane pass occupies residues 4–21 (LIFLLICLLSLLQYRLWL). Residues 22–100 (GDNNLSEYVL…ELRERNPFNR (79 aa)) lie on the Periplasmic side of the membrane. A coiled-coil region spans residues 49-73 (RNQILKEEIIDLKRGTEAIEERARN).

It belongs to the FtsB family. As to quaternary structure, part of a complex composed of FtsB, FtsL and FtsQ.

The protein localises to the cell inner membrane. In terms of biological role, essential cell division protein. May link together the upstream cell division proteins, which are predominantly cytoplasmic, with the downstream cell division proteins, which are predominantly periplasmic. The sequence is that of Cell division protein FtsB from Shewanella frigidimarina (strain NCIMB 400).